The following is a 338-amino-acid chain: GTPase Obg (338 aa).

The Obg domain occupies 1–159 (MKFIDEVTLF…AKLRLELKLM (159 aa)). Positions 160–331 (ADVGLLGLPN…LLDEIARRLW (172 aa)) constitute an OBG-type G domain. Residues 166-173 (GLPNAGKS), 191-195 (FTTIK), 213-216 (DIPG), 283-286 (TKLD), and 312-314 (SSA) each bind GTP. Ser173 and Thr193 together coordinate Mg(2+).

This sequence belongs to the TRAFAC class OBG-HflX-like GTPase superfamily. OBG GTPase family. As to quaternary structure, monomer. Mg(2+) is required as a cofactor.

It localises to the cytoplasm. Its function is as follows. An essential GTPase which binds GTP, GDP and possibly (p)ppGpp with moderate affinity, with high nucleotide exchange rates and a fairly low GTP hydrolysis rate. Plays a role in control of the cell cycle, stress response, ribosome biogenesis and in those bacteria that undergo differentiation, in morphogenesis control. This Pelobacter propionicus (strain DSM 2379 / NBRC 103807 / OttBd1) protein is GTPase Obg.